Consider the following 307-residue polypeptide: Ribosomal protein L11 methyltransferase (307 aa).

The S-adenosyl-L-methionine site is built by Thr-162, Gly-183, Asp-205, and Asn-244.

This sequence belongs to the methyltransferase superfamily. PrmA family.

Its subcellular location is the cytoplasm. It catalyses the reaction L-lysyl-[protein] + 3 S-adenosyl-L-methionine = N(6),N(6),N(6)-trimethyl-L-lysyl-[protein] + 3 S-adenosyl-L-homocysteine + 3 H(+). Its function is as follows. Methylates ribosomal protein L11. In Bordetella parapertussis (strain 12822 / ATCC BAA-587 / NCTC 13253), this protein is Ribosomal protein L11 methyltransferase.